Reading from the N-terminus, the 125-residue chain is S-adenosylmethionine decarboxylase proenzyme (125 aa).

The active-site Schiff-base intermediate with substrate; via pyruvic acid is the S71. S71 is modified (pyruvic acid (Ser); by autocatalysis). H76 acts as the Proton acceptor; for processing activity in catalysis. Catalysis depends on C91, which acts as the Proton donor; for catalytic activity.

The protein belongs to the prokaryotic AdoMetDC family. Type 1 subfamily. In terms of assembly, heterotetramer of two alpha and two beta chains arranged as a dimer of alpha/beta heterodimers. Pyruvate is required as a cofactor. Post-translationally, is synthesized initially as an inactive proenzyme. Formation of the active enzyme involves a self-maturation process in which the active site pyruvoyl group is generated from an internal serine residue via an autocatalytic post-translational modification. Two non-identical subunits are generated from the proenzyme in this reaction, and the pyruvate is formed at the N-terminus of the alpha chain, which is derived from the carboxyl end of the proenzyme. The post-translation cleavage follows an unusual pathway, termed non-hydrolytic serinolysis, in which the side chain hydroxyl group of the serine supplies its oxygen atom to form the C-terminus of the beta chain, while the remainder of the serine residue undergoes an oxidative deamination to produce ammonia and the pyruvoyl group blocking the N-terminus of the alpha chain.

The catalysed reaction is S-adenosyl-L-methionine + H(+) = S-adenosyl 3-(methylsulfanyl)propylamine + CO2. It participates in amine and polyamine biosynthesis; S-adenosylmethioninamine biosynthesis; S-adenosylmethioninamine from S-adenosyl-L-methionine: step 1/1. Its function is as follows. Catalyzes the decarboxylation of S-adenosylmethionine to S-adenosylmethioninamine (dcAdoMet), the propylamine donor required for the synthesis of the polyamines spermine and spermidine from the diamine putrescine. In Pyrobaculum aerophilum (strain ATCC 51768 / DSM 7523 / JCM 9630 / CIP 104966 / NBRC 100827 / IM2), this protein is S-adenosylmethionine decarboxylase proenzyme.